We begin with the raw amino-acid sequence, 267 residues long: Formamidopyrimidine-DNA glycosylase (267 aa).

Residue proline 2 is the Schiff-base intermediate with DNA of the active site. Glutamate 3 (proton donor) is an active-site residue. Lysine 58 (proton donor; for beta-elimination activity) is an active-site residue. Histidine 91, arginine 110, and arginine 152 together coordinate DNA. The segment at aspartate 233–glutamine 267 adopts an FPG-type zinc-finger fold. Arginine 257 serves as the catalytic Proton donor; for delta-elimination activity.

This sequence belongs to the FPG family. As to quaternary structure, monomer. Zn(2+) serves as cofactor.

The catalysed reaction is Hydrolysis of DNA containing ring-opened 7-methylguanine residues, releasing 2,6-diamino-4-hydroxy-5-(N-methyl)formamidopyrimidine.. It carries out the reaction 2'-deoxyribonucleotide-(2'-deoxyribose 5'-phosphate)-2'-deoxyribonucleotide-DNA = a 3'-end 2'-deoxyribonucleotide-(2,3-dehydro-2,3-deoxyribose 5'-phosphate)-DNA + a 5'-end 5'-phospho-2'-deoxyribonucleoside-DNA + H(+). Its function is as follows. Involved in base excision repair of DNA damaged by oxidation or by mutagenic agents. Acts as a DNA glycosylase that recognizes and removes damaged bases. Has a preference for oxidized purines, such as 7,8-dihydro-8-oxoguanine (8-oxoG). Has AP (apurinic/apyrimidinic) lyase activity and introduces nicks in the DNA strand. Cleaves the DNA backbone by beta-delta elimination to generate a single-strand break at the site of the removed base with both 3'- and 5'-phosphates. The sequence is that of Formamidopyrimidine-DNA glycosylase from Pelobacter propionicus (strain DSM 2379 / NBRC 103807 / OttBd1).